The sequence spans 81 residues: Putative membrane protein insertion efficiency factor (81 aa).

The protein belongs to the UPF0161 family.

It localises to the cell inner membrane. Could be involved in insertion of integral membrane proteins into the membrane. In Pseudomonas savastanoi pv. phaseolicola (strain 1448A / Race 6) (Pseudomonas syringae pv. phaseolicola (strain 1448A / Race 6)), this protein is Putative membrane protein insertion efficiency factor.